Reading from the N-terminus, the 277-residue chain is B3 domain-containing protein At3g19184 (277 aa).

A disordered region spans residues 33-94 (QSLRVSSSSS…LERRPRRSSR (62 aa)). The TF-B3 DNA-binding region spans 130–221 (FTKPMLQSHV…TFKVYIIRVN (92 aa)). Residues 224 to 250 (ANNDSDGNEVNDDDSDGNEEDRDNDNE) are compositionally biased toward acidic residues. Positions 224-277 (ANNDSDGNEVNDDDSDGNEEDRDNDNESNEKQKETVSEGRQLRSSGKRKRRGRK) are disordered. Over residues 251-264 (SNEKQKETVSEGRQ) the composition is skewed to basic and acidic residues. Positions 268–277 (SGKRKRRGRK) are enriched in basic residues.

It localises to the nucleus. This Arabidopsis thaliana (Mouse-ear cress) protein is B3 domain-containing protein At3g19184.